A 407-amino-acid chain; its full sequence is Phosphopentomutase (407 aa).

Positions 10, 306, 311, 347, 348, and 359 each coordinate Mn(2+).

The protein belongs to the phosphopentomutase family. Requires Mn(2+) as cofactor.

It localises to the cytoplasm. It catalyses the reaction 2-deoxy-alpha-D-ribose 1-phosphate = 2-deoxy-D-ribose 5-phosphate. The enzyme catalyses alpha-D-ribose 1-phosphate = D-ribose 5-phosphate. It participates in carbohydrate degradation; 2-deoxy-D-ribose 1-phosphate degradation; D-glyceraldehyde 3-phosphate and acetaldehyde from 2-deoxy-alpha-D-ribose 1-phosphate: step 1/2. Functionally, isomerase that catalyzes the conversion of deoxy-ribose 1-phosphate (dRib-1-P) and ribose 1-phosphate (Rib-1-P) to deoxy-ribose 5-phosphate (dRib-5-P) and ribose 5-phosphate (Rib-5-P), respectively. The polypeptide is Phosphopentomutase (Sodalis glossinidius (strain morsitans)).